A 466-amino-acid chain; its full sequence is Asparagine--tRNA ligase (466 aa).

It belongs to the class-II aminoacyl-tRNA synthetase family. In terms of assembly, homodimer.

The protein localises to the cytoplasm. The enzyme catalyses tRNA(Asn) + L-asparagine + ATP = L-asparaginyl-tRNA(Asn) + AMP + diphosphate + H(+). The chain is Asparagine--tRNA ligase from Buchnera aphidicola subsp. Schizaphis graminum (strain Sg).